The following is a 278-amino-acid chain: Tryptophan synthase alpha chain (278 aa).

Active-site proton acceptor residues include Glu50 and Asp61.

The protein belongs to the TrpA family. Tetramer of two alpha and two beta chains.

It catalyses the reaction (1S,2R)-1-C-(indol-3-yl)glycerol 3-phosphate + L-serine = D-glyceraldehyde 3-phosphate + L-tryptophan + H2O. It participates in amino-acid biosynthesis; L-tryptophan biosynthesis; L-tryptophan from chorismate: step 5/5. The alpha subunit is responsible for the aldol cleavage of indoleglycerol phosphate to indole and glyceraldehyde 3-phosphate. This chain is Tryptophan synthase alpha chain, found in Rhodopseudomonas palustris (strain BisB5).